A 544-amino-acid chain; its full sequence is Putative ligase Rv1013 (544 aa).

An Isoglutamyl lysine isopeptide (Lys-Gln) (interchain with Q-Cter in protein Pup) cross-link involves residue Lys528.

It belongs to the ATP-dependent AMP-binding enzyme family. Pupylated at Lys-528 by the prokaryotic ubiquitin-like protein Pup, which probably leads to its degradation by the proteasome.

The polypeptide is Putative ligase Rv1013 (pks16) (Mycobacterium tuberculosis (strain ATCC 25618 / H37Rv)).